A 354-amino-acid polypeptide reads, in one-letter code: Guanine nucleotide-binding protein G(i) subunit alpha-1 (354 aa).

Gly2 is lipidated: N-myristoyl glycine. The S-palmitoyl cysteine moiety is linked to residue Cys3. The G-alpha domain maps to 32-354; the sequence is REVKLLLLGA…KNNLKDCGLF (323 aa). The segment at 35 to 48 is G1 motif; sequence KLLLLGAGESGKST. GTP contacts are provided by residues 43 to 48, 150 to 151, and 175 to 178; these read ESGKST, DS, and LRTR. Ser47 provides a ligand contact to Mg(2+). Positions 173-181 are G2 motif; sequence DVLRTRVKT. A Mg(2+)-binding site is contributed by Thr181. Residues 196-205 form a G3 motif region; it reads FKMFDVGGQR. Residues 200–204, 269–272, and Ala326 each bind GTP; these read DVGGQ and NKKD. Positions 265 to 272 are G4 motif; the sequence is ILFLNKKD. The tract at residues 324-329 is G5 motif; the sequence is TCATDT.

This sequence belongs to the G-alpha family. G(i/o/t/z) subfamily. As to quaternary structure, heterotrimeric G proteins are composed of 3 units; alpha, beta and gamma. The alpha chain contains the guanine nucleotide binding site. Part of a spindle orientation complex. Identified in complex with the beta subunit GNB1 and the gamma subunit GNG1. Identified in complex with the beta subunit GNB1 and the gamma subunit GNG2. GTP binding causes dissociation of the heterotrimer, liberating the individual subunits so that they can interact with downstream effector proteins. Post-translationally, myristoylation at Gly-2 is required for membrane anchoring before palmitoylation. Palmitoylation at Cys-3 varies with membrane lipid composition.

Its subcellular location is the nucleus. It localises to the cytoplasm. It is found in the cell membrane. The protein resides in the cytoskeleton. The protein localises to the microtubule organizing center. Its subcellular location is the centrosome. It localises to the cell cortex. It is found in the membrane. The catalysed reaction is GTP + H2O = GDP + phosphate + H(+). Functionally, guanine nucleotide-binding proteins (G proteins) function as transducers downstream of G protein-coupled receptors (GPCRs) in numerous signaling cascades. The alpha chain contains the guanine nucleotide binding site and alternates between an active, GTP-bound state and an inactive, GDP-bound state. Signaling by an activated GPCR promotes GDP release and GTP binding. The alpha subunit has a low GTPase activity that converts bound GTP to GDP, thereby terminating the signal. Both GDP release and GTP hydrolysis are modulated by numerous regulatory proteins. Signaling is mediated via effector proteins, such as adenylate cyclase. Inhibits adenylate cyclase activity of ADCY1, ADCY5 and ADCY6, leading to decreased intracellular cAMP levels. Required for cortical dynein-dynactin complex recruitment during metaphase. The polypeptide is Guanine nucleotide-binding protein G(i) subunit alpha-1 (GNAI1) (Gallus gallus (Chicken)).